The following is a 267-amino-acid chain: Hydroxyethylthiazole kinase (267 aa).

Methionine 46 is a substrate binding site. The ATP site is built by arginine 121 and threonine 167. Position 194 (alanine 194) interacts with substrate.

It belongs to the Thz kinase family. It depends on Mg(2+) as a cofactor.

It catalyses the reaction 5-(2-hydroxyethyl)-4-methylthiazole + ATP = 4-methyl-5-(2-phosphooxyethyl)-thiazole + ADP + H(+). Its pathway is cofactor biosynthesis; thiamine diphosphate biosynthesis; 4-methyl-5-(2-phosphoethyl)-thiazole from 5-(2-hydroxyethyl)-4-methylthiazole: step 1/1. Its function is as follows. Catalyzes the phosphorylation of the hydroxyl group of 4-methyl-5-beta-hydroxyethylthiazole (THZ). The polypeptide is Hydroxyethylthiazole kinase (Rhizobium leguminosarum bv. trifolii (strain WSM2304)).